Here is a 117-residue protein sequence, read N- to C-terminus: uncharacterized protein (117 aa).

The next 3 helical transmembrane spans lie at 32–52 (VSSS…VTVV), 56–76 (VGVA…VTLL), and 87–107 (LSWC…SFFF).

Its subcellular location is the membrane. This is an uncharacterized protein from Saccharomyces cerevisiae (strain ATCC 204508 / S288c) (Baker's yeast).